Reading from the N-terminus, the 2548-residue chain is MEYKLFKNKKILNEKVNELTKKNRQRNTLDHINCIEIDDDDDDDNDNNEEPKEMNINKTNNNNNDILMKSCNDIRRNTTFYRHNVINEEQKNFEYLLSRKKKNVDSIDNVNFYDFMKNDFFNIFNNNIISEHKKTNQIVNQINNNVDTSKNVVYNINYDEHKGEVVNLSFDKKGKETYPQVDIELYNKKMNPRYQNINEQNTCQTSDDNTTYRNVYSDNCALNSSYTNFLRNKSLKYKKCYKQNRQDESTGAEFDYNLDESVYYDDCNNKLYKRSFLKNNKNIIEKGREEHKQDIYNNISDICKSYIKNFDYLNKRIFHNKSKIWKLSNKKVTIHGDPKKRIERNKQEIEDHRREQDGENDQEEDNYDDYDDEDDDDDNCHIYDNYDDYLENDDYDNHNYFYHKNHDVNKIRKIQNKNCSTDFINYTSINNRNMECPNKNADNLKNMDSFLLYMKERKIKKKKNINDHMENQLSDTLNNSNNYNKDVYDSYYDDMNFCYDKDYNMILKKGVNSNRTKSLDRYPNNISHNYVNNISSEIIKYCKDNNITLKSDIKNIINHFNKKYANSSLTNSKISMYENGYPQRSVDRIYDSSTNDPKSDMNGSNNNNSSSNNNNNITHITNDCDNTQTNKNKHYVNSIVNSIVNIFQKRKNVNEKKENINEQNCISFNTNLRNNKLNNNDDLCSNSYVNNINRNKQITNNENKKDNMLMLKGTYHGDSLNESINIEHNLKNNNSMSDVNFVLNNNDNDKKQNSYDISEVSINCYYDDVIKCYMDYTMHGMEDETNFYLCEFCEQNIFDMNNMIKKDKAKECMYRCNISCGRTFHKACVCYIKNNDNYICFFCLYDINFCTLCKEVLTNDSLLPCYYPLCSVSMHTKCVEKLLLFNSHCLKQYESIILPRDINIEQQKNTQKSASDGIIEQPLNIKKKIKRRHIYRKRRRRGPRKSQITTSNKKINKSELAGGSIINGVDMEQENDQGGNNNNNDDNNDDNNDNNDDNNDNNDDNNDNNDNNDDNNNDNNNNNNNDNNDNNNNNNNNNNNNDNDNNNNNNCDENFKNHLLKKDLLRDEPHHNNYDKILECNTEIKMENNVNMSEEPIYNKLFNGKEETLNNENDEKIIVLKKFICPLHICYVCKEFDINNTESSKKELKNNLFRCIKCYKSVHRKCMNQLKNNDNNDNDNNNNNINIYIISHKHRIICCANHMDDYKKEHMEYLKYIKEVKDICKLDEPIHNNNNNNNILSEKGFYGDENNLSISKFHNNSSYEPIKNKETCIKGKDSNYLSHDNKGITDMNNTNKMNVLNLKSCMVNDMNTSERKKKKSCESRGSNITNKKVVFDLTDELNEKEKSPPLDNVQNKIIYGDNEIEKNVNICQKEDGGLNLGSMNILSIGKNHMRTNNNNNNDSSCSSNNNIISVENEYILKNKNLNKSNNSLLDHNNKIKKNSTLNIKECTDSCINVDEFINKNQNEKDISLENIDALCIKRKRNVSHPYNDTLDDTNILKDISNNKSYYVNISKKKRNVSFNYKEEFMKGDEQFLLKGNNLESNEKNTKNKLCNNDNNNNNNNKGKNTKYNTLDRKNNKNKQINDTINKEPENINHNMQNQQLTDNFVEDNMKYKQEIYHIKLSHILSIEKGLLSLQEINIDQMNDECKKHISILCTFRQDFINYVIFLFSKRLHKENQIEPVNGVDHKKEGNIYHAERKQEKINHNAKHNEQGSINNAKHNEQGSINNAKHNEQDSINNAKQNEQDSINNAKHNEQDSINNAKHNEQDSINNAKHNEDDSLNNAKHNEDDSLNNAKQNEEDSLNNAKQNEEDILNNDDHRNQEELHERWKENMVYNFLANYDKKEKKYISKKEEDAIIKILSNDIVGIMKKELKISLYDFIMLKKKTISTNENHKDNDESVVYVEDGKHHCNDINKMKDNVNNDIIPNIKYNNNNYDDVINTKEKESIPDASYMKVTRNQSIMNNDIYNNNIQIIEKERIMNNNKKNYYDEEKKREEYNGLFSKGKKKSFKNNKMDLKTFFSLTNNGYKVDISILKKYSSFLKFEYISKNIYLNDKNKNLLACKSDDYKCLCQGECNLYTCYNSLSNIQCSKSRCNLPEKIQDRKCFNRPFRKSFVKDLEIKKTEKTGYGVFCKRDIKNGELICEYVGEVLGKREFEKRLEVYQEESKKTDMYNWYIIQINKDVYIDSGKKGSISRFINHSCSPNSVSQKWIVRGFYRIGIFALRDIPSGEEITYNYSYNFLFNNFECLCKSPNCMNYHLLKKGESSGASNIIKETELLNNTIFNPVENFHNLHGKMQDWNIFIEEAHTRLLYEYNKMNAFNLRLMECYSTWIFYDMNFQKNQFFSLKSKPYNVSAEFWKVLVSAFSDGEKNIINTFNLFLPSLIKIGQLRRIQQYSYILHNIIGLEHDMWNLIDKGFADDEVCRKCKSCGNLTMCDKCFQSYHQLCGNMHSKMYKNNELVLCRFCQKYDYKIQWIKENHGSKMKTCIEIRSKAFYKLNRDIMTLLEESVKYTQNQSLDSIHAHNTKAFKSKKLKLRKFQYKYVKI.

Residues Ile-37–Asn-48 are compositionally biased toward acidic residues. 3 disordered regions span residues Ile-37–Asn-61, Gly-336–Asn-379, and Ser-585–Thr-629. Residues Gly-336–Asp-357 are compositionally biased toward basic and acidic residues. A compositionally biased stretch (acidic residues) spans Gly-358 to Asp-378. Positions Asn-602 to Asn-616 are enriched in low complexity. The segment covering Ile-617–Thr-629 has biased composition (polar residues). The PHD-type 1 zinc-finger motif lies at Phe-787–Asp-846. The segment covering Ile-929–Arg-944 has biased composition (basic residues). 4 disordered regions span residues Ile-929 to Asn-1054, Glu-1546 to Asp-1575, Glu-1713 to Lys-1732, and Ile-1772 to Arg-1822. A compositionally biased stretch (acidic residues) spans Asp-986–Asn-1016. 2 stretches are compositionally biased toward low complexity: residues Asn-1017–Asn-1050 and Asn-1551–Asn-1572. Residues Gln-1714 to Lys-1732 show a composition bias toward polar residues. Residues Ser-2067–Phe-2117 enclose the AWS domain. The SET domain occupies Lys-2119–Ser-2240. Residue Tyr-2239 participates in S-adenosyl-L-methionine binding. The PHD-type 2 zinc-finger motif lies at Asp-2423–Tyr-2471.

Belongs to the class V-like SAM-binding methyltransferase superfamily.

It localises to the nucleus. Its subcellular location is the chromosome. It carries out the reaction L-lysyl(36)-[histone H3] + 3 S-adenosyl-L-methionine = N(6),N(6),N(6)-trimethyl-L-lysyl(36)-[histone H3] + 3 S-adenosyl-L-homocysteine + 3 H(+). Functionally, histone methyltransferase that specifically represses expression of the surface antigen-coding var genes by mediating trimethylation of 'Lys-36' of histone H3 (H3K36me3) on var genes. SETVS-dependent H3K36me3 is specifically involved in var genes silencing, a central step malaria pathogenesis: each parasite contains 60 distinct var genes that each code for a different PfEMP1 protein. During infection, the clonal parasite population expresses only 1 gene at a time, while the 59 other var genes are silenced. The parasite then switches to the expression of a new variant antigen as an immune-evasion mechanism to avoid the host antibody response. Represses expression of both var mRNA and antisense long non-coding RNA. The chain is Variant-silencing SET domain-containing protein (SETVS) from Plasmodium falciparum (isolate 3D7).